Here is a 333-residue protein sequence, read N- to C-terminus: DNA-directed RNA polymerase subunit alpha (333 aa).

Positions 1 to 251 (MEKLTKIKHR…AHFQTIGDLT (251 aa)) are alpha N-terminal domain (alpha-NTD). The segment at 272 to 333 (DMEIRLLNLS…KLNEYGKLKN (62 aa)) is alpha C-terminal domain (alpha-CTD).

The protein belongs to the RNA polymerase alpha chain family. As to quaternary structure, homodimer. The RNAP catalytic core consists of 2 alpha, 1 beta, 1 beta' and 1 omega subunit. When a sigma factor is associated with the core the holoenzyme is formed, which can initiate transcription.

The catalysed reaction is RNA(n) + a ribonucleoside 5'-triphosphate = RNA(n+1) + diphosphate. DNA-dependent RNA polymerase catalyzes the transcription of DNA into RNA using the four ribonucleoside triphosphates as substrates. The protein is DNA-directed RNA polymerase subunit alpha of Mycoplasmopsis synoviae (strain 53) (Mycoplasma synoviae).